A 421-amino-acid chain; its full sequence is 3-isopropylmalate dehydratase large subunit (421 aa).

Residues C302, C362, and C365 each contribute to the [4Fe-4S] cluster site.

Belongs to the aconitase/IPM isomerase family. LeuC type 2 subfamily. In terms of assembly, heterodimer of LeuC and LeuD. Requires [4Fe-4S] cluster as cofactor.

The enzyme catalyses (2R,3S)-3-isopropylmalate = (2S)-2-isopropylmalate. Its pathway is amino-acid biosynthesis; L-leucine biosynthesis; L-leucine from 3-methyl-2-oxobutanoate: step 2/4. Catalyzes the isomerization between 2-isopropylmalate and 3-isopropylmalate, via the formation of 2-isopropylmaleate. The polypeptide is 3-isopropylmalate dehydratase large subunit (Campylobacter fetus subsp. fetus (strain 82-40)).